The following is a 932-amino-acid chain: Protocadherin gamma-A6 (932 aa).

An N-terminal signal peptide occupies residues 1–29; sequence MAPPQRHPQRSEQVLLLTLLGTLWGAAAA. Cadherin domains follow at residues 30–133, 134–242, 243–347, 348–452, 453–562, and 570–682; these read QIRY…TPRF, LKEE…TPMF, TQPV…VPEV, VVTS…PPTF, PHSS…APEI, and DGST…EPSA. The Extracellular segment spans residues 30 to 692; sequence QIRYSIPEEL…KPNDSDLTLY (663 aa). Asn-81 is a glycosylation site (N-linked (GlcNAc...) asparagine). Asn-419 and Asn-545 each carry an N-linked (GlcNAc...) asparagine glycan. Residue Asn-685 is glycosylated (N-linked (GlcNAc...) asparagine). A helical membrane pass occupies residues 693 to 713; the sequence is LVVAVAAVSCVFLAFVIVLLA. Topologically, residues 714-932 are cytoplasmic; the sequence is LRLQRWHKSR…KKKSGKKEKK (219 aa). Disordered stretches follow at residues 804–841 and 902–932; these read PRQLQQAPPNTDWRFSQAQRPGTSGSQNGDDTGTWPNN and ATLTNAAGKRDGKAPAGGNGNKKKSGKKEKK. A compositionally biased stretch (polar residues) spans 806–841; sequence QLQQAPPNTDWRFSQAQRPGTSGSQNGDDTGTWPNN. Residues 922–932 show a composition bias toward basic residues; sequence NKKKSGKKEKK.

The protein localises to the cell membrane. Potential calcium-dependent cell-adhesion protein. May be involved in the establishment and maintenance of specific neuronal connections in the brain. The polypeptide is Protocadherin gamma-A6 (PCDHGA6) (Homo sapiens (Human)).